Consider the following 164-residue polypeptide: Glutamate uptake regulatory protein (164 aa).

The 62-residue stretch at 5–66 folds into the HTH asnC-type domain; the sequence is LDDFDIKILD…LLDPQKIGLG (62 aa). Positions 24–43 form a DNA-binding region, H-T-H motif; it reads MAELSEKTGLSANACWRRIR.

Its function is as follows. Represses the secondary, H(+)-coupled glutamate uptake system (Gluemp) genes. In Zymomonas mobilis subsp. mobilis (strain ATCC 10988 / DSM 424 / LMG 404 / NCIMB 8938 / NRRL B-806 / ZM1), this protein is Glutamate uptake regulatory protein (grp).